A 417-amino-acid polypeptide reads, in one-letter code: Probable histone-binding protein lin-53 (417 aa).

WD repeat units follow at residues 118 to 158 (NHEG…AVPR), 170 to 210 (GHTK…NVAG), 220 to 260 (GHES…PGHC), 263 to 303 (AHSA…MKLH), 307 to 347 (SHRD…EDQS), and 364 to 404 (GHTA…YNEV).

It belongs to the WD repeat RBAP46/RBAP48/MSI1 family. Binds directly to helix 1 of the histone fold of histone H4, a region that is not accessible when H4 is in chromatin. Probable component of a NuRD-like complex, composed of at least lin-53 and hda-1. Interacts with lin-35. Interacts with hda-1; the interaction is direct. Component of the DRM complex, at least composed of lin-9, lin-35, lin-37, lin-52, lin-53, lin-54- dpl-1 and efl-1. Interacts with hcp-3.

It localises to the nucleus. It is found in the chromosome. Its subcellular location is the centromere. Its function is as follows. Core histone-binding subunit that may target chromatin assembly factors, chromatin remodeling factors and histone deacetylases to their histone substrates in a manner that is regulated by nucleosomal DNA. Required for hcp-3 and his-1 stabilization, localization of hcp-3 to centromeres and for proper chromosome segregation. Synthetic multivulva class B (synMuvB) protein. SynMuvB proteins are required to repress the induction of vulval development by Ras signaling and probably act by forming the multiprotein DRM complex that represses transcription. The chain is Probable histone-binding protein lin-53 from Caenorhabditis elegans.